A 632-amino-acid chain; its full sequence is Pentatricopeptide repeat-containing protein ELI1, chloroplastic (632 aa).

A chloroplast-targeting transit peptide spans 1 to 19 (MASSPLLATSLPQNQLSTT). 10 PPR repeats span residues 94-128 (DLFL…EINP), 129-159 (NEFT…GLGI), 160-194 (DPYV…SLVS), 196-221 (TAMI…MCER), 222-256 (DIVS…GKPK), 258-292 (DEIT…RIRL), 293-323 (NVKV…TPRK), 324-354 (DIVA…MQGI), 360-395 (TDIT…GIKP), and 396-426 (KIEH…MNMD). The segment at 431 to 506 (LWSSVLGSCK…EPGISTIEIE (76 aa)) is type E motif. The required for function in RNA editing stretch occupies residues 497 to 512 (EPGISTIEIENKVHEF). The tract at residues 507-537 (NKVHEFRAGDREHSKSKEIYTMLRKISERIK) is type E(+) motif. Residues 538–632 (SHGYVPNTNT…DGSCSCGDFW (95 aa)) form a type DYW motif region.

Belongs to the PPR family. PCMP-H subfamily. It depends on Zn(2+) as a cofactor.

Its subcellular location is the plastid. It localises to the chloroplast. In terms of biological role, plays a major role in single RNA editing events in chloroplasts. Acts as a site-recognition transacting factor involved in the edition of the site 5 of ndhB1 and ndhB2 (ndhB1-5 and ndhB2-5 sites corresponding to cytidine-830), which are plastid-encoded subunits of the NADH-plastoquinone oxidoreductase. May provide the catalytic activity for editing site conversion. The polypeptide is Pentatricopeptide repeat-containing protein ELI1, chloroplastic (Arabidopsis thaliana (Mouse-ear cress)).